We begin with the raw amino-acid sequence, 412 residues long: Serine hydroxymethyltransferase (412 aa).

(6S)-5,6,7,8-tetrahydrofolate is bound by residues leucine 120 and 124–126 (GHL). Residue lysine 229 is modified to N6-(pyridoxal phosphate)lysine. 352-354 (SPF) serves as a coordination point for (6S)-5,6,7,8-tetrahydrofolate.

This sequence belongs to the SHMT family. In terms of assembly, homodimer. Requires pyridoxal 5'-phosphate as cofactor.

It is found in the cytoplasm. It carries out the reaction (6R)-5,10-methylene-5,6,7,8-tetrahydrofolate + glycine + H2O = (6S)-5,6,7,8-tetrahydrofolate + L-serine. Its pathway is one-carbon metabolism; tetrahydrofolate interconversion. The protein operates within amino-acid biosynthesis; glycine biosynthesis; glycine from L-serine: step 1/1. Functionally, catalyzes the reversible interconversion of serine and glycine with tetrahydrofolate (THF) serving as the one-carbon carrier. This reaction serves as the major source of one-carbon groups required for the biosynthesis of purines, thymidylate, methionine, and other important biomolecules. Also exhibits THF-independent aldolase activity toward beta-hydroxyamino acids, producing glycine and aldehydes, via a retro-aldol mechanism. The polypeptide is Serine hydroxymethyltransferase (Ruminiclostridium cellulolyticum (strain ATCC 35319 / DSM 5812 / JCM 6584 / H10) (Clostridium cellulolyticum)).